The chain runs to 302 residues: Zinc transporter ZIP1 (302 aa).

Over 1–6 (MDYLLQ) the chain is Extracellular. A helical membrane pass occupies residues 7-27 (VKVGALVGLLLLTLFFGFIPA). The Cytoplasmic portion of the chain corresponds to 28–44 (RMKWFHVTGGTELHKAV). The chain crosses the membrane as a helical span at residues 45-65 (LSFVSCFAGGVFLSACLLDII). Topologically, residues 66-86 (PDYLSDIHGELQKRDLDDGFP) are extracellular. Residues 87–107 (LPEFIMACGFFTVLILEKMVL) form a helical membrane-spanning segment. Residues 108–158 (SCTEGHRNEETAPLLAPAAPNGHAHGHPSVNDLEGSGHHVHVDFHAHSSFR) are Cytoplasmic-facing. The helical transmembrane segment at 159–179 (SFMLFLSLSLHSVFEGLAIGL) threads the bilayer. Residues 180-185 (QTTNAK) lie on the Extracellular side of the membrane. A helical membrane pass occupies residues 186 to 206 (VLEICIAILVHKSIIVFSLSV). The Cytoplasmic segment spans residues 207 to 219 (KLVQSAVKPLWVV). The helical transmembrane segment at 220–240 (LYVTVFAIMSPLGIGIGIVVI) threads the bilayer. Over 241–247 (ETERQAG) the chain is Extracellular. A helical transmembrane segment spans residues 248–268 (GLIQAVLEGLAAGTFIYITFL). Residues 269-281 (EILPHELNSSERP) are Cytoplasmic-facing. The helical transmembrane segment at 282–302 (LLKVLFLLCGFSIMAALCFLG) threads the bilayer.

It belongs to the ZIP transporter (TC 2.A.5) family. As to expression, ubiquitous. Highest levels in ovary, high levels in heart, eye, kidney and brain, moderate levels in intestine and low levels in gill and skin.

The protein localises to the cell membrane. The protein resides in the endoplasmic reticulum membrane. The enzyme catalyses Zn(2+)(in) = Zn(2+)(out). Functionally, transporter for the divalent cation Zn(2+). Mediates the influx of Zn(2+) into cells from extracellular space. The chain is Zinc transporter ZIP1 (slc39a1) from Danio rerio (Zebrafish).